The following is a 280-amino-acid chain: Chaperone protein LppX (280 aa).

The N-terminal stretch at 1–18 is a signal peptide; the sequence is MRKWLIFLLIAAVAGLSA. C19 carries N-palmitoyl cysteine lipidation. The S-diacylglycerol cysteine moiety is linked to residue C19.

The protein resides in the cell membrane. Its function is as follows. Is required for the expression of the adjacently encoded xylanase Xyn11E in an active form. LppX seems to act as a specific chaperone necessary for the correct folding of the xylanase during secretion across the cytoplasmic membrane. The sequence is that of Chaperone protein LppX from Paenibacillus barcinonensis.